A 476-amino-acid chain; its full sequence is Glucose-1-phosphate adenylyltransferase (476 aa).

Alpha-D-glucose 1-phosphate-binding positions include Tyr-114, Gly-179, 194–195, and Ser-212; that span reads EK.

Belongs to the bacterial/plant glucose-1-phosphate adenylyltransferase family. In terms of assembly, homotetramer.

The enzyme catalyses alpha-D-glucose 1-phosphate + ATP + H(+) = ADP-alpha-D-glucose + diphosphate. The protein operates within glycan biosynthesis; glycogen biosynthesis. Involved in the biosynthesis of ADP-glucose, a building block required for the elongation reactions to produce glycogen. Catalyzes the reaction between ATP and alpha-D-glucose 1-phosphate (G1P) to produce pyrophosphate and ADP-Glc. The sequence is that of Glucose-1-phosphate adenylyltransferase from Yersinia pestis.